We begin with the raw amino-acid sequence, 208 residues long: Histone H1.3 (208 aa).

Serine 2 is subject to N-acetylserine. The H15 domain occupies 37–113 (AHPPYINMVT…GASGRFRVTE (77 aa)). The tract at residues 113–208 (EKKAAAAKKP…PAKKAVAPKT (96 aa)) is disordered. Basic residues-rich tracts occupy residues 148–158 (KAKKTTATKTK) and 165–191 (KKVK…KSAP). Positions 192–208 (KKAAAAKPAKKAVAPKT) are enriched in low complexity.

Belongs to the histone H1/H5 family.

Its subcellular location is the nucleus. It localises to the chromosome. Its function is as follows. Histones H1 are necessary for the condensation of nucleosome chains into higher-order structures. The sequence is that of Histone H1.3 (hil-3) from Caenorhabditis elegans.